A 299-amino-acid chain; its full sequence is HTH-type transcriptional regulator PgrR (299 aa).

Residues 4-61 (EEIADLMAFVVVAEERSFTRAAARLSMAQSALSQIVRRIEERLGLRLLTRTTRSVVPT) form the HTH lysR-type domain. The H-T-H motif DNA-binding region spans 21-40 (FTRAAARLSMAQSALSQIVR).

This sequence belongs to the LysR transcriptional regulatory family.

Regulates the expression of genes involved in peptidoglycan (PG) degradation. Could play a role in switch control between recycling and degradation of PG peptides. Negatively regulates the expression of the ycjY-ymjD-ymjC-mpaA operon by binding to the PgrR-box. In addition, other genes are predicted to be under the control of PgrR, including genes related to membrane formation and function. In Escherichia coli (strain K12), this protein is HTH-type transcriptional regulator PgrR (pgrR).